Reading from the N-terminus, the 90-residue chain is Putative Fis-like DNA-binding protein (90 aa).

The segment at residues glutamine 66–lysine 85 is a DNA-binding region (H-T-H motif).

The protein belongs to the transcriptional regulatory Fis family.

In Xylella fastidiosa (strain Temecula1 / ATCC 700964), this protein is Putative Fis-like DNA-binding protein.